The primary structure comprises 500 residues: Histidinol dehydrogenase homolog 1 (500 aa).

Residues Met-1–Ala-25 form a disordered region. Over residues Pro-12–Thr-21 the composition is skewed to basic residues. Zn(2+) is bound by residues Gln-313 and His-316. Residues Glu-381 and His-382 each act as proton acceptor in the active site. Positions 415 and 475 each coordinate Zn(2+).

Belongs to the histidinol dehydrogenase family. It depends on Zn(2+) as a cofactor.

The sequence is that of Histidinol dehydrogenase homolog 1 from Mesorhizobium japonicum (strain LMG 29417 / CECT 9101 / MAFF 303099) (Mesorhizobium loti (strain MAFF 303099)).